A 321-amino-acid polypeptide reads, in one-letter code: tRNA U34 carboxymethyltransferase (321 aa).

Carboxy-S-adenosyl-L-methionine is bound by residues K90, W104, K109, G129, 151–153 (DPT), 180–181 (IE), M195, Y199, and R314.

The protein belongs to the class I-like SAM-binding methyltransferase superfamily. CmoB family. Homotetramer.

It catalyses the reaction carboxy-S-adenosyl-L-methionine + 5-hydroxyuridine(34) in tRNA = 5-carboxymethoxyuridine(34) in tRNA + S-adenosyl-L-homocysteine + H(+). Catalyzes carboxymethyl transfer from carboxy-S-adenosyl-L-methionine (Cx-SAM) to 5-hydroxyuridine (ho5U) to form 5-carboxymethoxyuridine (cmo5U) at position 34 in tRNAs. This chain is tRNA U34 carboxymethyltransferase, found in Haemophilus influenzae (strain ATCC 51907 / DSM 11121 / KW20 / Rd).